A 302-amino-acid chain; its full sequence is Aspartate carbamoyltransferase catalytic subunit (302 aa).

Residues arginine 55 and threonine 56 each contribute to the carbamoyl phosphate site. Lysine 83 serves as a coordination point for L-aspartate. Carbamoyl phosphate-binding residues include arginine 105, histidine 133, and glutamine 136. L-aspartate-binding residues include arginine 166 and arginine 222. Carbamoyl phosphate is bound by residues glycine 262 and proline 263.

It belongs to the aspartate/ornithine carbamoyltransferase superfamily. ATCase family. Heterododecamer (2C3:3R2) of six catalytic PyrB chains organized as two trimers (C3), and six regulatory PyrI chains organized as three dimers (R2).

It catalyses the reaction carbamoyl phosphate + L-aspartate = N-carbamoyl-L-aspartate + phosphate + H(+). It participates in pyrimidine metabolism; UMP biosynthesis via de novo pathway; (S)-dihydroorotate from bicarbonate: step 2/3. Functionally, catalyzes the condensation of carbamoyl phosphate and aspartate to form carbamoyl aspartate and inorganic phosphate, the committed step in the de novo pyrimidine nucleotide biosynthesis pathway. The sequence is that of Aspartate carbamoyltransferase catalytic subunit from Solibacter usitatus (strain Ellin6076).